The chain runs to 370 residues: Endopolygalacturonase A (370 aa).

An N-terminal signal peptide occupies residues 1 to 19; sequence MPSAKPLFCLATLAGAALA. A propeptide spanning residues 20-32 is cleaved from the precursor; sequence APAPSRATDFNKR. Residues Cys-35 and Cys-50 are joined by a disulfide bond. PbH1 repeat units follow at residues 162 to 192, 193 to 214, 215 to 235, 244 to 265, 273 to 295, and 307 to 352; these read SDNL…DISE, STYI…AINS, GENI…SIGS, VKNV…RIKT, VEDI…VIEQ, and SNGV…DITG. Cysteines 209 and 225 form a disulfide. His-229 is an active-site residue. Asn-246 carries an N-linked (GlcNAc...) asparagine glycan. 2 disulfide bridges follow: Cys-335–Cys-340 and Cys-359–Cys-368.

The protein belongs to the glycosyl hydrolase 28 family.

It is found in the secreted. It catalyses the reaction (1,4-alpha-D-galacturonosyl)n+m + H2O = (1,4-alpha-D-galacturonosyl)n + (1,4-alpha-D-galacturonosyl)m.. Functionally, involved in maceration and soft-rotting of plant tissue. Hydrolyzes the 1,4-alpha glycosidic bonds of de-esterified pectate in the smooth region of the plant cell wall. The chain is Endopolygalacturonase A (pgaA) from Aspergillus awamori (Black koji mold).